Reading from the N-terminus, the 206-residue chain is Thiamine-phosphate synthase (206 aa).

4-amino-2-methyl-5-(diphosphooxymethyl)pyrimidine contacts are provided by residues 38–42 and Asn70; that span reads QLRAK. Mg(2+) contacts are provided by Asp71 and Asp90. Ser107 contacts 4-amino-2-methyl-5-(diphosphooxymethyl)pyrimidine. 2-[(2R,5Z)-2-carboxy-4-methylthiazol-5(2H)-ylidene]ethyl phosphate is bound at residue 133 to 135; sequence TTT. Lys136 contacts 4-amino-2-methyl-5-(diphosphooxymethyl)pyrimidine. Residues Gly164 and 184-185 each bind 2-[(2R,5Z)-2-carboxy-4-methylthiazol-5(2H)-ylidene]ethyl phosphate; that span reads VS.

This sequence belongs to the thiamine-phosphate synthase family. Requires Mg(2+) as cofactor.

The catalysed reaction is 2-[(2R,5Z)-2-carboxy-4-methylthiazol-5(2H)-ylidene]ethyl phosphate + 4-amino-2-methyl-5-(diphosphooxymethyl)pyrimidine + 2 H(+) = thiamine phosphate + CO2 + diphosphate. It carries out the reaction 2-(2-carboxy-4-methylthiazol-5-yl)ethyl phosphate + 4-amino-2-methyl-5-(diphosphooxymethyl)pyrimidine + 2 H(+) = thiamine phosphate + CO2 + diphosphate. It catalyses the reaction 4-methyl-5-(2-phosphooxyethyl)-thiazole + 4-amino-2-methyl-5-(diphosphooxymethyl)pyrimidine + H(+) = thiamine phosphate + diphosphate. The protein operates within cofactor biosynthesis; thiamine diphosphate biosynthesis; thiamine phosphate from 4-amino-2-methyl-5-diphosphomethylpyrimidine and 4-methyl-5-(2-phosphoethyl)-thiazole: step 1/1. In terms of biological role, condenses 4-methyl-5-(beta-hydroxyethyl)thiazole monophosphate (THZ-P) and 2-methyl-4-amino-5-hydroxymethyl pyrimidine pyrophosphate (HMP-PP) to form thiamine monophosphate (TMP). This chain is Thiamine-phosphate synthase, found in Herpetosiphon aurantiacus (strain ATCC 23779 / DSM 785 / 114-95).